A 37-amino-acid chain; its full sequence is Cytochrome b6-f complex subunit 7 (37 aa).

A helical transmembrane segment spans residues 11–29; sequence AILSIVLVLVGLAWGFLLL.

This sequence belongs to the PetM family. As to quaternary structure, the 4 large subunits of the cytochrome b6-f complex are cytochrome b6, subunit IV (17 kDa polypeptide, PetD), cytochrome f and the Rieske protein, while the 4 small subunits are PetG, PetL, PetM and PetN. The complex functions as a dimer.

It is found in the cellular thylakoid membrane. In terms of biological role, component of the cytochrome b6-f complex, which mediates electron transfer between photosystem II (PSII) and photosystem I (PSI), cyclic electron flow around PSI, and state transitions. The chain is Cytochrome b6-f complex subunit 7 from Gloeothece citriformis (strain PCC 7424) (Cyanothece sp. (strain PCC 7424)).